The sequence spans 578 residues: CTP synthase (578 aa).

Residues 305–559 form the Glutamine amidotransferase type-1 domain; it reads KIALVGKYTN…LGLVAASSGI (255 aa). Active-site for GATase activity residues include Cys404, His535, and Glu537.

This sequence belongs to the CTP synthase family.

The enzyme catalyses UTP + L-glutamine + ATP + H2O = CTP + L-glutamate + ADP + phosphate + 2 H(+). The protein operates within pyrimidine metabolism; CTP biosynthesis via de novo pathway; CTP from UDP: step 2/2. In terms of biological role, catalyzes the ATP-dependent amination of UTP to CTP with either L-glutamine or ammonia as the source of nitrogen. This is CTP synthase (URA7) from Candida glabrata (strain ATCC 2001 / BCRC 20586 / JCM 3761 / NBRC 0622 / NRRL Y-65 / CBS 138) (Yeast).